We begin with the raw amino-acid sequence, 678 residues long: Oviduct-specific glycoprotein (678 aa).

The first 21 residues, 1–21 (MWKLLLWVGLVLVLKHHDGAA), serve as a signal peptide directing secretion. One can recognise a GH18 domain in the interval 22–385 (HKLVCYFTNW…YVLNDILVRA (364 aa)). Cysteines 26 and 51 form a disulfide. Chitin-binding positions include 71 to 72 (LQ), 98 to 101 (GGWN), tyrosine 142, 211 to 214 (LSYD), and tryptophan 355. Asparagine 402 and asparagine 441 each carry an N-linked (GlcNAc...) asparagine glycan. The tract at residues 524-544 (LTPVGHQSVTPVSHQSVSPGG) is disordered. Over residues 528–544 (GHQSVTPVSHQSVSPGG) the composition is skewed to polar residues. 3 N-linked (GlcNAc...) asparagine glycosylation sites follow: asparagine 580, asparagine 596, and asparagine 648. The tract at residues 581–606 (ISVTPEGQTMPLRGENLTSEVGTHPR) is disordered. Over residues 651-662 (SVNSVTPQTSPL) the composition is skewed to polar residues. Residues 651–678 (SVNSVTPQTSPLSLKKEIPENSAVDEEA) are disordered.

This sequence belongs to the glycosyl hydrolase 18 family. Oviduct.

The protein resides in the cytoplasmic vesicle. It localises to the secretory vesicle. Binds to oocyte zona pellucida in vivo. May play a role in the fertilization process and/or early embryonic development. The polypeptide is Oviduct-specific glycoprotein (OVGP1) (Homo sapiens (Human)).